Reading from the N-terminus, the 2194-residue chain is MGAQVSRQQTGTHENANVATGGSSITYNQINFYKDSYAASASKQDFSQDPSKFTEPVAEALKAGAPVLKSPSAEACGYSDRVLQLKLGNSSIVTQEAANICCAYGEWPTYLPDNEAVAIDKPTQPETSTDRFYTLKSKKWESNSTGWWWKLPDALNQIGMFGQNVQYHYLYRSGFLCHVQCNATKFHQGTLLIVAIPEHQIGKKGTGTSASFAEVMKGAEGGVFEQPYLLDDGTSLACALVYPHQWINLRTNNSATIVLPWMNSAPMDFALRHNNWTLAVIPVCPLAGGTGNTNTYVPITISIAPMCAEYNGLRNAITQGVPTCLLPGSNQFLTTDDHSSAPAFPDFSPTPEMHIPGQVHSMLEIVQIESMMEINNVNDASGVERLRVQISAQSDMDQLLFNIPLDIQLEGPLRNTLLGNISRYYTHWSGSLEMTFMFCGSFMTTGKLIICYTPPGGSSPTDRMQAMLATHVVWDFGLQSSITIIIPWISGSHYRMFNTDAKAINANVGYVTCFMQTNLVAPVGAADQCYIVGMVAAKKDFNLRLMRDSPDIGQSAILPEQAATTQIGEIVKTVANTVESEIKAELGVIPSLNAVETGATSNTEPEEAIQTRTVINMHGTAECLVENFLGRSALVCMRSFEYKNHSTSTSSIQKNFFIWTLNTRELVQIRRKMELFTYLRFDTEITIVPTLRLFSSSNVSFSGLPNLTLQAMYVPTGARKPSSQDSFEWQSACNPSVFFKINDPPARLTIPFMSINSAYANFYDGFAGFEKKATVLYGINPANTMGNLCLRVVNSYQPVQYTLTVRVYMKPKHIKAWAPRAPRTMPYTNILNNNYAGRSAAPNAPTAIVSHRSTIKTMPNDINLTTAGPGYGGAFVGSYKIINYHLATDEEKERSVYVDWQSDVLVTTVAAHGKHQIARCRCNTGVYYCKHKNRSYPVCFEGPGIQWINESDYYPARYQTNTLLAMGPCQPGDCGGLLVCSHGVIGLVTAGGEGIVAFTDIRNLLWLEDDAMEQGITDYIQNLGSAFGTGFTETISEKAKEIQNMLVGEDSLLEKLLKALIKIVSAMVIVIRNSEDLVTVTATLALLGCNDSPWAFLKQKVCSYLGIPYTIRQSDSWLKKFTEACNALRGLDWLAQKIDKFINWLKTKILPEAREKHEFVQKLKQLPVIESQINTIEHSCPNSEXQQALFNNVQYYSHYCKKYAPLYALEAKRVSALERKINNYIQFKSKSRIEPVCLIIHGSPGTGKSVASNLIARAITEKLGGDSYSLPPDPKYFDGYKQQTVVLMDDLMQNPDGNDIAMFCQMVSTVDFIPPMASLEEKGTLYTSPFLIATTNAGSIHAPTVSDSKALARRFKFDMEIESMESYKDGVRLDMFKAVELCNPEKCRPTNYKKCCPLICGKAIQFRDKRTNVRYSVDMLVTEMIKEYRIRNSTQDKLEALFQGPPTFKEIKISVTPETPAPDAINDLLRSIDSQEVRDYCQKKGWIVMHPPTELVVDKHISRAFIALQAITTFVSIAGVVYVIYKLFAGIQGPYTGLPNQKPKVPTLRTAKVQGPSLDFAQAIMRKNTVIARTSKGEFTMLGIYDRIAVVPTHASVEEEIYINDVPVKVKDAYALRDINDVNLEITVVELDRNEKFRDIRGFLPKYEDDYNDAILSVNTSKFPNMYIPVGQTLNYGFLNLGGTPTHRILMYNFPTRAGQCGGVVTTTGKVIGIHVGGNGAQGFAAMLLQNYFTEKQGEIVSIEKTGVFINAPAKTKLEPSVFHEVFEGVKEPAVLHSKDKRLKVDFEEAIFSKYVGNKTMLMDEYMEEAVDHYVGCLEPLDISTEPIKLEEAMYGMDGLEALDLTTSAGYPYLLQGKKKRDIFNRQTRDTTEMTKMLDKYGVDLPFVTFVKDELRSREKVEKGKSRLIEASSLNDSVAMRVAFGNLYATFHKNPGVATGSAVGCDPDLFWSKIPVXLDGKIFAFDYTGYDASLSPVWFACLKKTLVKLGYTHQTAFVDYLCHSVHLYKDRKYIVNGGMPSGSSGTSIFNTMINNIIIRTLLLKVYKGIDLDQFKMIAYGDDVIASYPHEIDPGLLAKAGKEYGLIMTPADKSSGFTETTWENVTFLKRYFRADEQYPFLIHPVMPMKEIHESIRWTKDPRNTQDHVRSLCLLAWHNGEETYNEFCRKIRTVPVGRALALPVYSSLRRKWLDSF.

The segment at 1-20 (MGAQVSRQQTGTHENANVAT) is disordered. Residue Gly2 is the site of N-myristoyl glycine; by host attachment. Residues 2-1509 (GAQVSRQQTG…HISRAFIALQ (1508 aa)) are Cytoplasmic-facing. The tract at residues 558 to 574 (LPEQAATTQIGEIVKTV) is amphipathic alpha-helix. Residues His885 and Asp903 each act as for protease 2A activity in the active site. Zn(2+)-binding residues include Cys920 and Cys922. Catalysis depends on Cys974, which acts as the For protease 2A activity. Zn(2+) contacts are provided by Cys980 and His982. The interval 1114-1186 (SDSWLKKFTE…EHSCPNSEXQ (73 aa)) is membrane-binding. The oligomerization stretch occupies residues 1114 to 1252 (SDSWLKKFTE…SPGTGKSVAS (139 aa)). Residues 1135-1139 (AQKID) are RNA-binding. An SF3 helicase domain is found at 1218–1374 (ERKINNYIQF…ESYKDGVRLD (157 aa)). ATP is bound at residue 1242–1249 (GSPGTGKS). 3 residues coordinate Zn(2+): Cys1382, Cys1395, and Cys1400. The C4-type; degenerate zinc-finger motif lies at 1382–1400 (CNPEKCRPTNYKKCCPLIC). The segment at 1427 to 1434 (EYRIRNST) is RNA-binding. The oligomerization stretch occupies residues 1438 to 1443 (LEALFQ). The stretch at 1510 to 1525 (AITTFVSIAGVVYVIY) is an intramembrane region. The Cytoplasmic segment spans residues 1526–2194 (KLFAGIQGPY…SLRRKWLDSF (669 aa)). Tyr1535 bears the O-(5'-phospho-RNA)-tyrosine mark. The region spanning 1555–1733 (GPSLDFAQAI…FAAMLLQNYF (179 aa)) is the Peptidase C3 domain. Residues His1594, Glu1625, and Cys1701 each act as for protease 3C activity in the active site. Positions 1960–2075 (GKIFAFDYTG…SYPHEIDPGL (116 aa)) constitute a RdRp catalytic domain. Asp1966 and Asp2061 together coordinate Mg(2+).

It belongs to the picornaviruses polyprotein family. In terms of assembly, interacts with capsid protein VP1 and capsid protein VP3 to form heterotrimeric protomers. As to quaternary structure, interacts with capsid protein VP0, and capsid protein VP3 to form heterotrimeric protomers. Five protomers subsequently associate to form pentamers which serve as building blocks for the capsid. Interacts with capsid protein VP2, capsid protein VP3 and capsid protein VP4 following cleavage of capsid protein VP0. Interacts with capsid protein VP1 and capsid protein VP3 in the mature capsid. In terms of assembly, interacts with capsid protein VP0 and capsid protein VP1 to form heterotrimeric protomers. Five protomers subsequently associate to form pentamers which serve as building blocks for the capsid. Interacts with capsid protein VP4 in the mature capsid. Interacts with protein 2C; this interaction may be important for virion morphogenesis. As to quaternary structure, interacts with capsid protein VP1 and capsid protein VP3. Homodimer. In terms of assembly, homohexamer; forms a hexameric ring structure with 6-fold symmetry characteristic of AAA+ ATPases. Interacts (via N-terminus) with host RTN3 (via reticulon domain); this interaction is important for viral replication. Interacts with capsid protein VP3; this interaction may be important for virion morphogenesis. As to quaternary structure, interacts with protein 3CD. Homodimer. Interacts with host GBF1. Interacts (via GOLD domain) with host ACBD3 (via GOLD domain); this interaction allows the formation of a viral protein 3A/ACBD3 heterotetramer with a 2:2 stoichiometry, which will stimulate the recruitment of host PI4KB in order to synthesize PI4P at the viral RNA replication sites. In terms of assembly, interacts with RNA-directed RNA polymerase. As to quaternary structure, interacts with protein 3AB and with RNA-directed RNA polymerase. Interacts with Viral protein genome-linked and with protein 3CD. Mg(2+) is required as a cofactor. Post-translationally, specific enzymatic cleavages in vivo by the viral proteases yield processing intermediates and the mature proteins. In terms of processing, myristoylation is required for the formation of pentamers during virus assembly. Further assembly of 12 pentamers and a molecule of genomic RNA generates the provirion. During virion maturation, immature virions are rendered infectious following cleavage of VP0 into VP4 and VP2. This maturation seems to be an autocatalytic event triggered by the presence of RNA in the capsid and it is followed by a conformational change infectious virion. Post-translationally, myristoylation is required during RNA encapsidation and formation of the mature virus particle. In terms of processing, VPg is uridylylated by the polymerase into VPg-pUpU. This acts as a nucleotide-peptide primer for the genomic RNA replication.

The protein localises to the virion. It localises to the host cytoplasm. The protein resides in the host cytoplasmic vesicle membrane. It is found in the host nucleus. It carries out the reaction a ribonucleoside 5'-triphosphate + H2O = a ribonucleoside 5'-diphosphate + phosphate + H(+). The catalysed reaction is Selective cleavage of Tyr-|-Gly bond in the picornavirus polyprotein.. It catalyses the reaction RNA(n) + a ribonucleoside 5'-triphosphate = RNA(n+1) + diphosphate. The enzyme catalyses Selective cleavage of Gln-|-Gly bond in the poliovirus polyprotein. In other picornavirus reactions Glu may be substituted for Gln, and Ser or Thr for Gly.. Its activity is regulated as follows. Replication or transcription is subject to high level of random mutations by the nucleotide analog ribavirin. In terms of biological role, forms an icosahedral capsid of pseudo T=3 symmetry with capsid proteins VP2 and VP3. The capsid is 300 Angstroms in diameter, composed of 60 copies of each capsid protein and enclosing the viral positive strand RNA genome. Capsid protein VP1 mainly forms the vertices of the capsid. Capsid protein VP1 interacts with host cell receptor to provide virion attachment to target host cells. This attachment induces virion internalization. Tyrosine kinases are probably involved in the entry process. After binding to its receptor, the capsid undergoes conformational changes. Capsid protein VP1 N-terminus (that contains an amphipathic alpha-helix) and capsid protein VP4 are externalized. Together, they shape a pore in the host membrane through which viral genome is translocated to host cell cytoplasm. Its function is as follows. Forms an icosahedral capsid of pseudo T=3 symmetry with capsid proteins VP2 and VP3. The capsid is 300 Angstroms in diameter, composed of 60 copies of each capsid protein and enclosing the viral positive strand RNA genome. Functionally, lies on the inner surface of the capsid shell. After binding to the host receptor, the capsid undergoes conformational changes. Capsid protein VP4 is released, Capsid protein VP1 N-terminus is externalized, and together, they shape a pore in the host membrane through which the viral genome is translocated into the host cell cytoplasm. Component of immature procapsids, which is cleaved into capsid proteins VP4 and VP2 after maturation. Allows the capsid to remain inactive before the maturation step. In terms of biological role, cysteine protease that cleaves viral polyprotein and specific host proteins. It is responsible for the autocatalytic cleavage between the P1 and P2 regions, which is the first cleavage occurring in the polyprotein. Also cleaves the host translation initiation factor EIF4G1, in order to shut down the capped cellular mRNA translation. Inhibits the host nucleus-cytoplasm protein and RNA trafficking by cleaving host members of the nuclear pores. Counteracts stress granule formation probably by antagonizing its assembly or promoting its dissassembly. Its function is as follows. Plays an essential role in the virus replication cycle by acting as a viroporin. Creates a pore in the host endoplasmic reticulum and as a consequence releases Ca2+ in the cytoplasm of infected cell. In turn, high levels of cytoplasmic calcium may trigger membrane trafficking and transport of viral ER-associated proteins to viroplasms, sites of viral genome replication. Functionally, induces and associates with structural rearrangements of intracellular membranes. Displays RNA-binding, nucleotide binding and NTPase activities. May play a role in virion morphogenesis and viral RNA encapsidation by interacting with the capsid protein VP3. Localizes the viral replication complex to the surface of membranous vesicles. Together with protein 3CD binds the Cis-Active RNA Element (CRE) which is involved in RNA synthesis initiation. Acts as a cofactor to stimulate the activity of 3D polymerase, maybe through a nucleid acid chaperone activity. In terms of biological role, localizes the viral replication complex to the surface of membranous vesicles. It inhibits host cell endoplasmic reticulum-to-Golgi apparatus transport and causes the disassembly of the Golgi complex, possibly through GBF1 interaction. This would result in depletion of MHC, trail receptors and IFN receptors at the host cell surface. Plays an essential role in viral RNA replication by recruiting ACBD3 and PI4KB at the viral replication sites, thereby allowing the formation of the rearranged membranous structures where viral replication takes place. Its function is as follows. Acts as a primer for viral RNA replication and remains covalently bound to viral genomic RNA. VPg is uridylylated prior to priming replication into VPg-pUpU. The oriI viral genomic sequence may act as a template for this. The VPg-pUpU is then used as primer on the genomic RNA poly(A) by the RNA-dependent RNA polymerase to replicate the viral genome. During genome replication, the VPg-RNA linkage is removed by the host TDP2, thereby accelerating replication. During the late stage of the replication cycle, host TDP2 is excluded from sites of viral RNA synthesis and encapsidation, allowing for the generation of progeny virions. Functionally, involved in the viral replication complex and viral polypeptide maturation. It exhibits protease activity with a specificity and catalytic efficiency that is different from protease 3C. Protein 3CD lacks polymerase activity. The 3C domain in the context of protein 3CD may have an RNA binding activity. Protein 3CD binds to the 5'UTR of the viral genome. Replicates the viral genomic RNA on the surface of intracellular membranes. May form linear arrays of subunits that propagate along a strong head-to-tail interaction called interface-I. Covalently attaches UMP to a tyrosine of VPg, which is used to prime RNA synthesis. The positive stranded RNA genome is first replicated at virus induced membranous vesicles, creating a dsRNA genomic replication form. This dsRNA is then used as template to synthesize positive stranded RNA genomes. ss(+)RNA genomes are either translated, replicated or encapsidated. In terms of biological role, major viral protease that mediates proteolytic processing of the polyprotein. Cleaves host EIF5B, contributing to host translation shutoff. Also cleaves host PABPC1, contributing to host translation shutoff. Cleaves host NLRP1, triggers host N-glycine-mediated degradation of the autoinhibitory NLRP1 N-terminal fragment. The polypeptide is Genome polyprotein (Homo sapiens (Human)).